Reading from the N-terminus, the 493-residue chain is 3-octaprenyl-4-hydroxybenzoate carboxy-lyase (493 aa).

A Mn(2+)-binding site is contributed by asparagine 175. Residues 178–180, 192–194, and 197–198 each bind prenylated FMN; these read IYR, RWL, and RG. Glutamate 241 is a binding site for Mn(2+). Aspartate 290 acts as the Proton donor in catalysis.

Belongs to the UbiD family. As to quaternary structure, homohexamer. The cofactor is prenylated FMN. It depends on Mn(2+) as a cofactor.

The protein localises to the cell membrane. It catalyses the reaction a 4-hydroxy-3-(all-trans-polyprenyl)benzoate + H(+) = a 2-(all-trans-polyprenyl)phenol + CO2. The protein operates within cofactor biosynthesis; ubiquinone biosynthesis. Catalyzes the decarboxylation of 3-octaprenyl-4-hydroxy benzoate to 2-octaprenylphenol, an intermediate step in ubiquinone biosynthesis. This chain is 3-octaprenyl-4-hydroxybenzoate carboxy-lyase, found in Photorhabdus laumondii subsp. laumondii (strain DSM 15139 / CIP 105565 / TT01) (Photorhabdus luminescens subsp. laumondii).